The primary structure comprises 344 residues: sn-glycerol-3-phosphate import ATP-binding protein UgpC 2 (344 aa).

The ABC transporter domain maps to 4–234; sequence IELIDLKKNY…PETVFVAGFI (231 aa). 36 to 43 is an ATP binding site; it reads GPSGCGKS.

Belongs to the ABC transporter superfamily. sn-glycerol-3-phosphate importer (TC 3.A.1.1.3) family. In terms of assembly, the complex is composed of two ATP-binding proteins (UgpC), two transmembrane proteins (UgpA and UgpE) and a solute-binding protein (UgpB).

It localises to the cell inner membrane. It catalyses the reaction sn-glycerol 3-phosphate(out) + ATP + H2O = sn-glycerol 3-phosphate(in) + ADP + phosphate + H(+). Its function is as follows. Part of the ABC transporter complex UgpBAEC involved in sn-glycerol-3-phosphate (G3P) import. Responsible for energy coupling to the transport system. This chain is sn-glycerol-3-phosphate import ATP-binding protein UgpC 2, found in Rhizobium johnstonii (strain DSM 114642 / LMG 32736 / 3841) (Rhizobium leguminosarum bv. viciae).